A 426-amino-acid chain; its full sequence is Glutamate-1-semialdehyde 2,1-aminomutase (426 aa).

An N6-(pyridoxal phosphate)lysine modification is found at Lys-265.

Belongs to the class-III pyridoxal-phosphate-dependent aminotransferase family. HemL subfamily. Homodimer. Pyridoxal 5'-phosphate serves as cofactor.

The protein resides in the cytoplasm. It catalyses the reaction (S)-4-amino-5-oxopentanoate = 5-aminolevulinate. Its pathway is porphyrin-containing compound metabolism; protoporphyrin-IX biosynthesis; 5-aminolevulinate from L-glutamyl-tRNA(Glu): step 2/2. This is Glutamate-1-semialdehyde 2,1-aminomutase from Salmonella gallinarum (strain 287/91 / NCTC 13346).